Here is a 4334-residue protein sequence, read N- to C-terminus: Cytoplasmic dynein 2 heavy chain 1 (4334 aa).

The interval 1 to 1704 (MSSDSRKTFV…KVAMAEATFD (1704 aa)) is stem. 150–157 (LGTAVRKG) serves as a coordination point for ATP. A coiled-coil region spans residues 1026 to 1097 (QEAKGLTAKL…AHLEEQKGNL (72 aa)). AAA stretches follow at residues 1705–1929 (YTWE…VLGI), 1996–2211 (KALA…KAFQ), 2299–2544 (GMDE…WING), and 2641–2882 (GYER…SSGS). ATP is bound by residues 1743–1750 (GPAGTGKT), 2034–2041 (GPSGSGKS), 2334–2341 (GPEGCGKG), and 2679–2686 (GNSGVGRR). The stalk stretch occupies residues 2897 to 3185 (QIYNRKRTQV…ISVDKAESVL (289 aa)). 2 coiled-coil regions span residues 2930-2998 (LSAE…SEVQ) and 3120-3199 (ERVS…RGEK). 2 AAA regions span residues 3260–3492 (LSSE…TVEK) and 3701–3917 (MSSF…VITL).

This sequence belongs to the dynein heavy chain family. In terms of assembly, the cytoplasmic dynein complex 2 is probably composed by a DHC1B homodimer and a number of D1BLIC light intermediate chains. Interacts with FAP133, FLA10 and LC8.

The protein localises to the cytoplasm. It is found in the cytoskeleton. Its subcellular location is the flagellum basal body. The protein resides in the cell projection. It localises to the cilium. The protein localises to the flagellum membrane. May function as a motor for intraflagellar retrograde transport. Functions in flagellar biogenesis. This chain is Cytoplasmic dynein 2 heavy chain 1 (DHC1B), found in Chlamydomonas reinhardtii (Chlamydomonas smithii).